The following is a 588-amino-acid chain: L-fucose isomerase (588 aa).

Active-site proton acceptor residues include Glu335 and Asp359. Mn(2+) is bound by residues Glu335, Asp359, and His525.

It belongs to the L-fucose isomerase family. Mn(2+) is required as a cofactor.

Its subcellular location is the cytoplasm. The catalysed reaction is L-fucose = L-fuculose. It functions in the pathway carbohydrate degradation; L-fucose degradation; L-lactaldehyde and glycerone phosphate from L-fucose: step 1/3. Functionally, converts the aldose L-fucose into the corresponding ketose L-fuculose. This chain is L-fucose isomerase, found in Streptococcus pneumoniae (strain P1031).